Consider the following 96-residue polypeptide: Co-chaperonin GroES (96 aa).

The protein belongs to the GroES chaperonin family. As to quaternary structure, heptamer of 7 subunits arranged in a ring. Interacts with the chaperonin GroEL.

Its subcellular location is the cytoplasm. Functionally, together with the chaperonin GroEL, plays an essential role in assisting protein folding. The GroEL-GroES system forms a nano-cage that allows encapsulation of the non-native substrate proteins and provides a physical environment optimized to promote and accelerate protein folding. GroES binds to the apical surface of the GroEL ring, thereby capping the opening of the GroEL channel. The protein is Co-chaperonin GroES of Shewanella baltica (strain OS223).